We begin with the raw amino-acid sequence, 270 residues long: 3-methyl-2-oxobutanoate hydroxymethyltransferase (270 aa).

Mg(2+) contacts are provided by D43 and D82. 3-methyl-2-oxobutanoate contacts are provided by residues 43-44, D82, and K112; that span reads DS. A Mg(2+)-binding site is contributed by E114. E179 functions as the Proton acceptor in the catalytic mechanism.

It belongs to the PanB family. Homodecamer; pentamer of dimers. Mg(2+) is required as a cofactor.

The protein localises to the cytoplasm. The enzyme catalyses 3-methyl-2-oxobutanoate + (6R)-5,10-methylene-5,6,7,8-tetrahydrofolate + H2O = 2-dehydropantoate + (6S)-5,6,7,8-tetrahydrofolate. It functions in the pathway cofactor biosynthesis; (R)-pantothenate biosynthesis; (R)-pantoate from 3-methyl-2-oxobutanoate: step 1/2. Catalyzes the reversible reaction in which hydroxymethyl group from 5,10-methylenetetrahydrofolate is transferred onto alpha-ketoisovalerate to form ketopantoate. The polypeptide is 3-methyl-2-oxobutanoate hydroxymethyltransferase (Staphylococcus carnosus (strain TM300)).